The sequence spans 112 residues: Protein new-glue 2 (112 aa).

An N-terminal signal peptide occupies residues 1 to 24 (MKITVVLVLLATFLGCVMIHESEA). Low complexity predominate over residues 24–69 (ASTTTTSTSASATTTTSASATTTTSASATTTTSASATTTTASPSSS). The interval 24 to 112 (ASTTTTSTSA…RSSRNRRSEE (89 aa)) is disordered. Tandem repeats lie at residues 31-38 (TSASATTT), 39-46 (TSASATTT), 47-54 (TSASATTT), and 55-62 (TSASATTT). Residues 31-62 (TSASATTTTSASATTTTSASATTTTSASATTT) form a 4 X 8 AA tandem repeats of T-S-A-S-A-T-T-T region. The segment covering 70-112 (SKKKTVTHYKRKVKRPKKVRKITRRRGLRSRNGRSSRNRRSEE) has biased composition (basic residues).

The protein to NG-1, also to SGS-3. Salivary gland specific.

The protein localises to the secreted. The protein is Protein new-glue 2 (ng2) of Drosophila melanogaster (Fruit fly).